The following is a 262-amino-acid chain: Small ribosomal subunit protein eS4y (262 aa).

An S4 RNA-binding domain is found at 42–104 (LPLVLIIRNR…TNENFRLLYD (63 aa)).

This sequence belongs to the eukaryotic ribosomal protein eS4 family.

Its subcellular location is the cytoplasm. The polypeptide is Small ribosomal subunit protein eS4y (RPS4B) (Arabidopsis thaliana (Mouse-ear cress)).